Here is a 673-residue protein sequence, read N- to C-terminus: Protein VirD3 (673 aa).

Disordered stretches follow at residues 36-73 (VAGE…GRLG), 171-216 (SPVN…GTSV), 229-409 (ERDT…LRSS), 478-497 (RLNG…LEDF), 520-552 (EKGK…VTPL), and 585-673 (DSSR…GCGR). Polar residues-rich tracts occupy residues 171–183 (SPVN…SNWQ), 193–216 (VQPS…GTSV), 234–246 (SETT…TISS), and 268–277 (QSLSVTVTTP). Residues 278 to 287 (NSNAEASSHS) are compositionally biased toward low complexity. Residues 288 to 303 (AHTETLDDVSSDRSSE) show a composition bias toward basic and acidic residues. 2 stretches are compositionally biased toward basic and acidic residues: residues 520-534 (EKGK…DTRF) and 638-673 (AAEH…GCGR).

The sequence is that of Protein VirD3 (virD3) from Agrobacterium fabrum (strain C58 / ATCC 33970) (Agrobacterium tumefaciens (strain C58)).